We begin with the raw amino-acid sequence, 540 residues long: Chaperonin GroEL (540 aa).

ATP-binding positions include 30–33, K51, 87–91, G415, and D496; these read TLGP and DGTTT.

Belongs to the chaperonin (HSP60) family. In terms of assembly, forms a cylinder of 14 subunits composed of two heptameric rings stacked back-to-back. Interacts with the co-chaperonin GroES.

The protein localises to the cytoplasm. The enzyme catalyses ATP + H2O + a folded polypeptide = ADP + phosphate + an unfolded polypeptide.. Functionally, together with its co-chaperonin GroES, plays an essential role in assisting protein folding. The GroEL-GroES system forms a nano-cage that allows encapsulation of the non-native substrate proteins and provides a physical environment optimized to promote and accelerate protein folding. The polypeptide is Chaperonin GroEL (Thermodesulfovibrio yellowstonii (strain ATCC 51303 / DSM 11347 / YP87)).